A 313-amino-acid polypeptide reads, in one-letter code: Protein sprouty homolog 2 (313 aa).

The segment covering 1–14 has biased composition (polar residues); the sequence is METRVQHGSGSQAL. Disordered regions lie at residues 1–31 and 54–146; these read METRVQHGSGSQALLQARRDSGRPHGEPDLR and EYTE…VADG. 2 stretches are compositionally biased toward basic and acidic residues: residues 17–31 and 78–89; these read ARRDSGRPHGEPDLR and KSERPHGLPEHR. Low complexity predominate over residues 108–131; that stretch reads SRSISTVSTGSRSSTRTSTSSNSS. Residues 132-141 are compositionally biased toward polar residues; the sequence is EQRLLGSSSG. In terms of domain architecture, SPR spans 175–289; that stretch reads RCEDCGKCKC…CYDRVNRPGC (115 aa).

Belongs to the sprouty family. As to expression, brain and interlimb region.

The protein localises to the cytoplasm. It localises to the membrane. Functionally, acts as an antagonist of FGF-induced retinal lens fiber differentiation. Inhibits TGFB-induced epithelial-to-mesenchymal transition in retinal lens epithelial cells. May play an important role in FGF-mediated patterning of the mid/hindbrain region by acting to modulate the signaling effects of FGF8. The polypeptide is Protein sprouty homolog 2 (SPRY2) (Gallus gallus (Chicken)).